Here is a 245-residue protein sequence, read N- to C-terminus: tRNA pseudouridine synthase A 2 (245 aa).

The Nucleophile role is filled by aspartate 53. Tyrosine 111 contributes to the substrate binding site.

It belongs to the tRNA pseudouridine synthase TruA family. As to quaternary structure, homodimer.

The catalysed reaction is uridine(38/39/40) in tRNA = pseudouridine(38/39/40) in tRNA. Formation of pseudouridine at positions 38, 39 and 40 in the anticodon stem and loop of transfer RNAs. The polypeptide is tRNA pseudouridine synthase A 2 (Bacillus cereus (strain ATCC 10987 / NRS 248)).